Here is a 538-residue protein sequence, read N- to C-terminus: Phosphoenolpyruvate carboxykinase (ATP) (538 aa).

Residues Arg-64, Tyr-205, and Lys-211 each coordinate substrate. ATP-binding positions include Lys-211, His-230, and 246-254 (GLSGTGKTT). Mn(2+)-binding residues include Lys-211 and His-230. Asp-267 lines the Mn(2+) pocket. Residues Glu-295, Arg-331, 447–448 (RI), and Thr-453 contribute to the ATP site. Residue Arg-331 participates in substrate binding.

The protein belongs to the phosphoenolpyruvate carboxykinase (ATP) family. In terms of assembly, monomer. Requires Mn(2+) as cofactor.

It is found in the cytoplasm. The catalysed reaction is oxaloacetate + ATP = phosphoenolpyruvate + ADP + CO2. Its pathway is carbohydrate biosynthesis; gluconeogenesis. Involved in the gluconeogenesis. Catalyzes the conversion of oxaloacetate (OAA) to phosphoenolpyruvate (PEP) through direct phosphoryl transfer between the nucleoside triphosphate and OAA. This chain is Phosphoenolpyruvate carboxykinase (ATP), found in Haemophilus influenzae (strain PittGG).